The primary structure comprises 293 residues: Ribosomal protein L11 methyltransferase (293 aa).

S-adenosyl-L-methionine contacts are provided by Thr145, Gly166, Asp188, and Asn230.

This sequence belongs to the methyltransferase superfamily. PrmA family.

It localises to the cytoplasm. It carries out the reaction L-lysyl-[protein] + 3 S-adenosyl-L-methionine = N(6),N(6),N(6)-trimethyl-L-lysyl-[protein] + 3 S-adenosyl-L-homocysteine + 3 H(+). Functionally, methylates ribosomal protein L11. This Erwinia tasmaniensis (strain DSM 17950 / CFBP 7177 / CIP 109463 / NCPPB 4357 / Et1/99) protein is Ribosomal protein L11 methyltransferase.